A 110-amino-acid polypeptide reads, in one-letter code: Snake venom vascular endothelial growth factor toxin ICPP (110 aa).

Residue glutamine 1 is modified to Pyrrolidone carboxylic acid. 3 disulfide bridges follow: cysteine 14–cysteine 56, cysteine 45–cysteine 91, and cysteine 49–cysteine 93.

In terms of assembly, homodimer; disulfide-linked. Interacts with high affinity with KDR/VEGFR-2, and with a lower affinity with neuropilin-1 (NRP1) and neuropilin-2 (NRP2). In terms of tissue distribution, expressed by the venom gland.

The protein localises to the secreted. Functionally, snake venom VEGFs may contribute to venom dispersion and prey subjugation by inducing vascular permeability and hypotension. This protein increases vascular permeability and angiogenesis probably through VEGF receptor (KDR/VEGFR-2) signaling. Induces DNA synthesis in human umbilical vein endothelial cells, and promotes mouse embryonic stem cell proliferation and differentiation. It may also induce a drastic hypotensive effect after intravenous injection. The hypotension is mediated by nitric oxide (NO), which is produced by VEGF-activated endothelium NO synthase. This is Snake venom vascular endothelial growth factor toxin ICPP from Macrovipera lebetinus (Levantine viper).